The sequence spans 598 residues: Elongation factor 4 (598 aa).

The region spanning 2–184 (NNIRNFAIIA…AIVTKLPAPQ (183 aa)) is the tr-type G domain. GTP contacts are provided by residues 14–19 (DHGKST) and 131–134 (NKVD).

The protein belongs to the TRAFAC class translation factor GTPase superfamily. Classic translation factor GTPase family. LepA subfamily.

The protein resides in the cell membrane. The enzyme catalyses GTP + H2O = GDP + phosphate + H(+). Its function is as follows. Required for accurate and efficient protein synthesis under certain stress conditions. May act as a fidelity factor of the translation reaction, by catalyzing a one-codon backward translocation of tRNAs on improperly translocated ribosomes. Back-translocation proceeds from a post-translocation (POST) complex to a pre-translocation (PRE) complex, thus giving elongation factor G a second chance to translocate the tRNAs correctly. Binds to ribosomes in a GTP-dependent manner. In Wolbachia pipientis subsp. Culex pipiens (strain wPip), this protein is Elongation factor 4.